A 233-amino-acid polypeptide reads, in one-letter code: Small ribosomal subunit protein uS3 (233 aa).

Positions 39-107 (VRQFLMKKLV…PAQINISEVR (69 aa)) constitute a KH type-2 domain.

This sequence belongs to the universal ribosomal protein uS3 family. In terms of assembly, part of the 30S ribosomal subunit. Forms a tight complex with proteins S10 and S14.

Binds the lower part of the 30S subunit head. Binds mRNA in the 70S ribosome, positioning it for translation. The protein is Small ribosomal subunit protein uS3 of Buchnera aphidicola subsp. Schizaphis graminum (strain Sg).